The sequence spans 353 residues: Alanine racemase (353 aa).

The Proton acceptor; specific for D-alanine role is filled by K33. Residue K33 is modified to N6-(pyridoxal phosphate)lysine. Residue R129 coordinates substrate. Y250 acts as the Proton acceptor; specific for L-alanine in catalysis. A substrate-binding site is contributed by M298.

It belongs to the alanine racemase family. The cofactor is pyridoxal 5'-phosphate.

The enzyme catalyses L-alanine = D-alanine. The protein operates within amino-acid biosynthesis; D-alanine biosynthesis; D-alanine from L-alanine: step 1/1. Functionally, catalyzes the interconversion of L-alanine and D-alanine. May also act on other amino acids. The chain is Alanine racemase (alr) from Aromatoleum aromaticum (strain DSM 19018 / LMG 30748 / EbN1) (Azoarcus sp. (strain EbN1)).